The sequence spans 437 residues: Aspartokinase (437 aa).

Belongs to the aspartokinase family.

The catalysed reaction is L-aspartate + ATP = 4-phospho-L-aspartate + ADP. It participates in amino-acid biosynthesis; L-lysine biosynthesis via DAP pathway; (S)-tetrahydrodipicolinate from L-aspartate: step 1/4. It functions in the pathway amino-acid biosynthesis; L-methionine biosynthesis via de novo pathway; L-homoserine from L-aspartate: step 1/3. The protein operates within amino-acid biosynthesis; L-threonine biosynthesis; L-threonine from L-aspartate: step 1/5. This is Aspartokinase (lysC) from Chlamydia muridarum (strain MoPn / Nigg).